A 347-amino-acid polypeptide reads, in one-letter code: D-alanine--D-alanine ligase (347 aa).

The 199-residue stretch at 134–332 (KLYAKDLGVK…LAQSLPKTPK (199 aa)) folds into the ATP-grasp domain. 161-216 (LIKFNFPFIVKPSNAGSSLGVNVVKEEKELVYALDSAFEYSKEVLIEPFIQGVKEY) provides a ligand contact to ATP. Residues Asp288, Glu300, and Asn302 each contribute to the Mg(2+) site.

Belongs to the D-alanine--D-alanine ligase family. Mg(2+) is required as a cofactor. The cofactor is Mn(2+).

It is found in the cytoplasm. It catalyses the reaction 2 D-alanine + ATP = D-alanyl-D-alanine + ADP + phosphate + H(+). It functions in the pathway cell wall biogenesis; peptidoglycan biosynthesis. Cell wall formation. The protein is D-alanine--D-alanine ligase of Helicobacter pylori (strain P12).